Reading from the N-terminus, the 236-residue chain is Small ribosomal subunit protein eS6 (236 aa).

2 positions are modified to phosphoserine: Ser232 and Ser233.

The protein belongs to the eukaryotic ribosomal protein eS6 family. Phosphorylated.

The protein is Small ribosomal subunit protein eS6 (RPS6) of Kluyveromyces lactis (strain ATCC 8585 / CBS 2359 / DSM 70799 / NBRC 1267 / NRRL Y-1140 / WM37) (Yeast).